Reading from the N-terminus, the 460-residue chain is MNLVTSKPNVLLNPLFAQLGENRHVLVGFSGGLDSTVLLHLLVCLRQQLIPELNIRAIHIHHGLNPQADSWVKHCMQQCDQWKIELKVVRVNIDPRQNGIEAAARTARYQAFSANLAAKEVLLTAQHLDDQCETFLLALKRGSGPAGLSAMAAKMPFAHSQLLRPLLAFSREILENYAQAQQLQWIEDDSNQDDRFDRNFLRLNVLPILNQRWPHFAQATARSAGLCAEQEQLLDELLAENLQQLQGPDRSLSIDGLLQASMAKRAAILRRWLASLGAPMPSQSQLQRLWLEVAMARQDAEPQLMIGTRQVRRFRQHLYLLMPLAEITTNYLPWATVKAAPNSSIIPLLPEPLWLPADLGVLRFVSAGGQAVRPAAVGEEISVRFGLQGDIKIVGRHHSRQSKKVWQELGIPPWQRERIPLLYFGEQLIAAAGVFVTQAGQANENEPCWHLDWDKPLKLG.

30–35 (SGGLDS) lines the ATP pocket.

The protein belongs to the tRNA(Ile)-lysidine synthase family.

It is found in the cytoplasm. It carries out the reaction cytidine(34) in tRNA(Ile2) + L-lysine + ATP = lysidine(34) in tRNA(Ile2) + AMP + diphosphate + H(+). In terms of biological role, ligates lysine onto the cytidine present at position 34 of the AUA codon-specific tRNA(Ile) that contains the anticodon CAU, in an ATP-dependent manner. Cytidine is converted to lysidine, thus changing the amino acid specificity of the tRNA from methionine to isoleucine. The polypeptide is tRNA(Ile)-lysidine synthase (Yersinia pseudotuberculosis serotype I (strain IP32953)).